We begin with the raw amino-acid sequence, 103 residues long: Flagellar hook-basal body complex protein FliE (103 aa).

This sequence belongs to the FliE family.

The protein resides in the bacterial flagellum basal body. The sequence is that of Flagellar hook-basal body complex protein FliE from Yersinia pestis.